The chain runs to 513 residues: t-SNARE domain-containing protein 1 (513 aa).

Disordered stretches follow at residues 1 to 23 (MSYGSIARGGGLGSRGPFGGPSR) and 49 to 128 (ESKL…KPNF). Residues 7–19 (ARGGGLGSRGPFG) are compositionally biased toward gly residues. Ser-378 carries the phosphoserine modification. The region spanning 416–478 (LEAIRLREEA…EAARQLLAGA (63 aa)) is the t-SNARE coiled-coil homology domain. A helical transmembrane segment spans residues 491-511 (CFLSAGVTALLVIIIIIATSV).

The protein localises to the membrane. This chain is t-SNARE domain-containing protein 1 (TSNARE1), found in Homo sapiens (Human).